The chain runs to 426 residues: Endoglucanase (426 aa).

Positions 1 to 19 (MRRCMPLVAASVAALMLAG) are cleaved as a signal peptide. Residue Cys-20 is the site of N-palmitoyl cysteine attachment. Cys-20 carries the S-diacylglycerol cysteine lipid modification. The propeptide occupies 20–45 (CGGGDGDPSLSTASVSATDTTTLKPA). Glu-249 acts as the Proton donor in catalysis. The active-site Nucleophile is the Glu-361.

It belongs to the glycosyl hydrolase 5 (cellulase A) family.

The protein resides in the cell membrane. It catalyses the reaction Endohydrolysis of (1-&gt;4)-beta-D-glucosidic linkages in cellulose, lichenin and cereal beta-D-glucans.. This is Endoglucanase (egl) from Ralstonia solanacearum (Pseudomonas solanacearum).